The sequence spans 338 residues: D-erythrose-4-phosphate dehydrogenase (338 aa).

Position 12–13 (12–13 (RI)) interacts with NAD(+). Residues 154–156 (SCT), Arg200, 213–214 (TK), and Arg236 contribute to the substrate site. Cys155 serves as the catalytic Nucleophile. Asn318 is a binding site for NAD(+).

The protein belongs to the glyceraldehyde-3-phosphate dehydrogenase family. Epd subfamily. As to quaternary structure, homotetramer.

It localises to the cytoplasm. It catalyses the reaction D-erythrose 4-phosphate + NAD(+) + H2O = 4-phospho-D-erythronate + NADH + 2 H(+). It functions in the pathway cofactor biosynthesis; pyridoxine 5'-phosphate biosynthesis; pyridoxine 5'-phosphate from D-erythrose 4-phosphate: step 1/5. Catalyzes the NAD-dependent conversion of D-erythrose 4-phosphate to 4-phosphoerythronate. The sequence is that of D-erythrose-4-phosphate dehydrogenase from Tolumonas auensis (strain DSM 9187 / NBRC 110442 / TA 4).